Here is a 513-residue protein sequence, read N- to C-terminus: uncharacterized protein (513 aa).

This sequence belongs to the NodU/CmcH family.

This is an uncharacterized protein from Methanocaldococcus jannaschii (strain ATCC 43067 / DSM 2661 / JAL-1 / JCM 10045 / NBRC 100440) (Methanococcus jannaschii).